A 164-amino-acid chain; its full sequence is Ubiquitin-fold modifier-conjugating enzyme 1 (164 aa).

The Glycyl thioester intermediate role is filled by C116.

The protein belongs to the ubiquitin-conjugating enzyme family. UFC1 subfamily.

Functionally, E2-like enzyme which forms an intermediate with UFM1 via a thioester linkage. This Drosophila ananassae (Fruit fly) protein is Ubiquitin-fold modifier-conjugating enzyme 1.